Here is a 310-residue protein sequence, read N- to C-terminus: Olfactory receptor 7A42 (310 aa).

The Extracellular segment spans residues 1-25 (MESGNSTRRIPSFFLLGFSENPHLQ). N-linked (GlcNAc...) asparagine glycosylation occurs at Asn-5. The chain crosses the membrane as a helical span at residues 26-46 (FLIFVLFLSMYLVTVLGNLLI). At 47–67 (IMVIITQSPLHTPMYFFLANL) the chain is on the cytoplasmic side. The chain crosses the membrane as a helical span at residues 68–88 (SFVDICFTSTTVPKMLVNIQT). Over 89 to 100 (QSKAITYADCIS) the chain is Extracellular. Cysteines 98 and 190 form a disulfide. The chain crosses the membrane as a helical span at residues 101–121 (QMSVFLVFAELDNFLLAVMAY). Over 122 to 135 (DRYVAICHPLYYTF) the chain is Cytoplasmic. A helical transmembrane segment spans residues 136-156 (IVNQHLCILMVLLSWVVSILH). The Extracellular segment spans residues 157 to 202 (AFLQSSIVLQLTFCGDVKIPHFFCELNQLSQLTCLDSLSSHLIMNL). The chain crosses the membrane as a helical span at residues 203 to 223 (VPVLLAVISFSSILYSYFKIV). Residues 224–240 (SSICSISSVQGKYTAFS) are Cytoplasmic-facing. A helical transmembrane segment spans residues 241-261 (TCVSHLSIVFLFYSTGLGVYV). Topologically, residues 262-272 (SSAVVQSSHSA) are extracellular. A helical membrane pass occupies residues 273–293 (ARASVMYTVVTPMLNPFIYSL). At 294 to 310 (RNKDVKKALERLLEGKL) the chain is on the cytoplasmic side.

The protein belongs to the G-protein coupled receptor 1 family.

The protein localises to the cell membrane. Functionally, odorant receptor. The protein is Olfactory receptor 7A42 of Mus musculus (Mouse).